The sequence spans 511 residues: Cytochrome P450 monooxygenase PUL2 (511 aa).

The chain crosses the membrane as a helical span at residues 14–34; sequence WMAFVYFTPVLFVVLYLLKEW. 3 N-linked (GlcNAc...) asparagine glycosylation sites follow: N116, N141, and N442. C462 is a heme binding site.

Belongs to the cytochrome P450 family. Requires heme as cofactor.

Its subcellular location is the membrane. Its pathway is siderophore biosynthesis. Functionally, cytochrome P450 monooxygenase; part of the PUL gene cluster that mediates the formation of pulcherrimin, a red iron-containing pigment composed of two cyclized and modified leucine molecules that acts as a siderophore, a chelator that binds iron outside the cell for subsequent uptake. Two leucine molecules are cyclized via a cyclodipeptide synthase, and the resulting diketopiperazine is oxidized by a cytochrome P450 monooxygenase to generate pulcherriminic acid (PA), which can then spontaneously bind iron to form pulcherrimin. The probable cyclodipeptide synthase PUL1 and the cytochrome P450 monooxygenase PUL2 encode the enzymes responsible for the two-step pulcherrimin biosynthesis pathway. In Kluyveromyces lactis (strain ATCC 8585 / CBS 2359 / DSM 70799 / NBRC 1267 / NRRL Y-1140 / WM37) (Yeast), this protein is Cytochrome P450 monooxygenase PUL2.